A 231-amino-acid chain; its full sequence is NADH-ubiquinone oxidoreductase chain 4 (231 aa).

The next 7 helical transmembrane spans lie at 1–21 (PIAG…YGII), 34–54 (MFLP…LTCL), 63–85 (IAYS…TPWG), 89–111 (AMAL…NTTY), 128–148 (ILPM…ATPP), 169–189 (TIIL…HMFL), and 211–231 (LLMT…ELVI).

The protein belongs to the complex I subunit 4 family.

Its subcellular location is the mitochondrion membrane. It carries out the reaction a ubiquinone + NADH + 5 H(+)(in) = a ubiquinol + NAD(+) + 4 H(+)(out). Core subunit of the mitochondrial membrane respiratory chain NADH dehydrogenase (Complex I) that is believed to belong to the minimal assembly required for catalysis. Complex I functions in the transfer of electrons from NADH to the respiratory chain. The immediate electron acceptor for the enzyme is believed to be ubiquinone. The protein is NADH-ubiquinone oxidoreductase chain 4 (MT-ND4) of Porthidium ophryomegas (Slender hognose viper).